The primary structure comprises 302 residues: Putative gluconeogenesis factor (302 aa).

The protein belongs to the gluconeogenesis factor family.

The protein localises to the cytoplasm. Its function is as follows. Required for morphogenesis under gluconeogenic growth conditions. This is Putative gluconeogenesis factor (ybhK) from Salmonella typhi.